The primary structure comprises 37 residues: Large ribosomal subunit protein bL36 (37 aa).

The protein belongs to the bacterial ribosomal protein bL36 family.

The polypeptide is Large ribosomal subunit protein bL36 (Magnetococcus marinus (strain ATCC BAA-1437 / JCM 17883 / MC-1)).